The following is a 531-amino-acid chain: High-affinity glucose transporter ght2 (531 aa).

Residues R5–M13 are Cytoplasmic-facing. The chain crosses the membrane as a helical span at residues L14–V34. At T35 to Q62 the chain is on the extracellular side. Residues G63–I83 form a helical membrane-spanning segment. Topologically, residues A84–L91 are cytoplasmic. Residues S92–P112 form a helical membrane-spanning segment. The Extracellular segment spans residues S113–Q116. A helical membrane pass occupies residues I117 to G137. The Cytoplasmic segment spans residues Y138 to R148. Residues G149 to I169 form a helical membrane-spanning segment. At N170–R183 the chain is on the extracellular side. Residues V184–P204 form a helical membrane-spanning segment. Over E205–T270 the chain is Cytoplasmic. A helical membrane pass occupies residues F271–F289. Residues Y290–Y305 lie on the Extracellular side of the membrane. The chain crosses the membrane as a helical span at residues L306–L326. Residues E327–R332 are Cytoplasmic-facing. A helical transmembrane segment spans residues N333–G353. At S354–R367 the chain is on the extracellular side. N-linked (GlcNAc...) asparagine glycosylation is present at N361. Residues A368–A388 form a helical membrane-spanning segment. The Cytoplasmic portion of the chain corresponds to P389 to A408. A helical transmembrane segment spans residues A409–I429. Residues Q430–K436 are Extracellular-facing. A helical transmembrane segment spans residues Y437 to K457. Topologically, residues E458–A531 are cytoplasmic. Residues K491–A531 form a disordered region. S507, S515, S519, and S520 each carry phosphoserine. Polar residues predominate over residues A514–S524. Residue Y523 is modified to Phosphotyrosine.

The protein belongs to the major facilitator superfamily. Sugar transporter (TC 2.A.1.1) family.

It localises to the membrane. Its function is as follows. High-affinity glucose transporter. The chain is High-affinity glucose transporter ght2 (ght2) from Schizosaccharomyces pombe (strain 972 / ATCC 24843) (Fission yeast).